The primary structure comprises 196 residues: Holliday junction branch migration complex subunit RuvA (196 aa).

The domain I stretch occupies residues 1-63; that stretch reads MYDYIKGILT…EDAHLLYGFA (63 aa). Residues 64–142 form a domain II region; that stretch reads TENEKSVFLS…MSEEAGPVQQ (79 aa). The tract at residues 142 to 146 is flexible linker; that stretch reads QVAPS. The tract at residues 147-196 is domain III; the sequence is SENIALEEAMEAMEALGYRPAELKKIKKFFEGTNDTAENYIKSALKMLMK.

Belongs to the RuvA family. Homotetramer. Forms an RuvA(8)-RuvB(12)-Holliday junction (HJ) complex. HJ DNA is sandwiched between 2 RuvA tetramers; dsDNA enters through RuvA and exits via RuvB. An RuvB hexamer assembles on each DNA strand where it exits the tetramer. Each RuvB hexamer is contacted by two RuvA subunits (via domain III) on 2 adjacent RuvB subunits; this complex drives branch migration. In the full resolvosome a probable DNA-RuvA(4)-RuvB(12)-RuvC(2) complex forms which resolves the HJ.

The protein resides in the cytoplasm. Functionally, the RuvA-RuvB-RuvC complex processes Holliday junction (HJ) DNA during genetic recombination and DNA repair, while the RuvA-RuvB complex plays an important role in the rescue of blocked DNA replication forks via replication fork reversal (RFR). RuvA specifically binds to HJ cruciform DNA, conferring on it an open structure. The RuvB hexamer acts as an ATP-dependent pump, pulling dsDNA into and through the RuvAB complex. HJ branch migration allows RuvC to scan DNA until it finds its consensus sequence, where it cleaves and resolves the cruciform DNA. This Streptococcus suis (strain 98HAH33) protein is Holliday junction branch migration complex subunit RuvA.